A 185-amino-acid chain; its full sequence is ATP synthase subunit delta, chloroplastic (185 aa).

This sequence belongs to the ATPase delta chain family. F-type ATPases have 2 components, F(1) - the catalytic core - and F(0) - the membrane proton channel. F(1) has five subunits: alpha(3), beta(3), gamma(1), delta(1), epsilon(1). CF(0) has four main subunits: a(1), b(1), b'(1) and c(10-14). The alpha and beta chains form an alternating ring which encloses part of the gamma chain. F(1) is attached to F(0) by a central stalk formed by the gamma and epsilon chains, while a peripheral stalk is formed by the delta, b and b' chains.

Its subcellular location is the plastid. It localises to the chloroplast thylakoid membrane. In terms of biological role, f(1)F(0) ATP synthase produces ATP from ADP in the presence of a proton or sodium gradient. F-type ATPases consist of two structural domains, F(1) containing the extramembraneous catalytic core and F(0) containing the membrane proton channel, linked together by a central stalk and a peripheral stalk. During catalysis, ATP synthesis in the catalytic domain of F(1) is coupled via a rotary mechanism of the central stalk subunits to proton translocation. Functionally, this protein is part of the stalk that links CF(0) to CF(1). It either transmits conformational changes from CF(0) to CF(1) or is implicated in proton conduction. This chain is ATP synthase subunit delta, chloroplastic, found in Guillardia theta (Cryptophyte).